The primary structure comprises 174 residues: MGEGLLDLRSQLGFYKFYHHNPKNVLIHSIFVPTILFSGSCMLHRVKIYQSISLTAVLSVLFSIFYCLLYLPTGLLAGVLLLLLNLALIDHRVDLTFKQELGLFTIGWIFQFVGHGVFEKRRPALIDNLVQSLVLAPYFIMFEFLFKLGFMPRLKATLEHDLEIKQRNLRMQRQ.

At 1-23 (MGEGLLDLRSQLGFYKFYHHNPK) the chain is on the cytoplasmic side. The helical transmembrane segment at 24–44 (NVLIHSIFVPTILFSGSCMLH) threads the bilayer. Residues 45–63 (RVKIYQSISLTAVLSVLFS) lie on the Lumenal side of the membrane. Residues 64–84 (IFYCLLYLPTGLLAGVLLLLL) traverse the membrane as a helical segment. The Cytoplasmic segment spans residues 85–98 (NLALIDHRVDLTFK). A helical transmembrane segment spans residues 99-119 (QELGLFTIGWIFQFVGHGVFE). Over 120 to 131 (KRRPALIDNLVQ) the chain is Lumenal. The helical transmembrane segment at 132-152 (SLVLAPYFIMFEFLFKLGFMP) threads the bilayer. Residues 153 to 174 (RLKATLEHDLEIKQRNLRMQRQ) lie on the Cytoplasmic side of the membrane.

Belongs to the MPO1 family. Fe(2+) serves as cofactor.

It localises to the endoplasmic reticulum membrane. The enzyme catalyses (R)-2-hydroxyhexadecanoate + O2 = pentadecanoate + CO2 + H2O. Its function is as follows. Dioxygenase that catalyzes the alpha-oxidation of 2-hydroxy fatty acids in an iron-dependent manner. Involved in metabolism of phytosphingosine and is required for proper endoplasmic reticulum stress response. The sequence is that of 2-hydroxy-palmitic acid dioxygenase MPO1 from Saccharomyces cerevisiae (strain ATCC 204508 / S288c) (Baker's yeast).